We begin with the raw amino-acid sequence, 521 residues long: Glucose-1-phosphate adenylyltransferase large subunit 3, chloroplastic (521 aa).

Residues 1–61 (MDSCCNFSLG…RKLRPGVAYA (61 aa)) constitute a chloroplast transit peptide.

This sequence belongs to the bacterial/plant glucose-1-phosphate adenylyltransferase family. Heterotetramer. Probably are expressed in roots, flowers and/or seeds.

Its subcellular location is the plastid. It localises to the chloroplast. The catalysed reaction is alpha-D-glucose 1-phosphate + ATP + H(+) = ADP-alpha-D-glucose + diphosphate. It participates in glycan biosynthesis; starch biosynthesis. Its activity is regulated as follows. Activated by 3'phosphoglycerate, inhibited by orthophosphate. Allosteric regulation. This protein plays a role in synthesis of starch. It catalyzes the synthesis of the activated glycosyl donor, ADP-glucose from Glc-1-P and ATP. The chain is Glucose-1-phosphate adenylyltransferase large subunit 3, chloroplastic (APL3) from Arabidopsis thaliana (Mouse-ear cress).